The following is a 537-amino-acid chain: Sodium/hydrogen exchanger 9B2 (537 aa).

Basic and acidic residues predominate over residues 1–10 (MGDEDKRITY). The tract at residues 1 to 28 (MGDEDKRITYEDSEPSTGMNYTPSMHQE) is disordered. Residues 1–86 (MGDEDKRITY…ACPPHGLLDR (86 aa)) lie on the Cytoplasmic side of the membrane. Residues 15-27 (PSTGMNYTPSMHQ) are compositionally biased toward polar residues. The residue at position 49 (S49) is a Phosphoserine. Residues 87 to 104 (VITNVTIIVLLWAVVWSI) form a helical membrane-spanning segment. Topologically, residues 105–113 (TGSECLPGG) are extracellular. Residues 114 to 133 (NLFGIIILFYCAIIGGKLLG) traverse the membrane as a helical segment. Residues 134 to 144 (LIKLPTLPPLP) are Cytoplasmic-facing. A helical membrane pass occupies residues 145-161 (SLLGMLLAGFLIRNIPV). Residues 162–171 (INDNVQIKHK) lie on the Extracellular side of the membrane. A helical transmembrane segment spans residues 172 to 189 (WSSSLRSIALSIILVRAG). The Cytoplasmic portion of the chain corresponds to 190–200 (LGLDSKALKKL). A helical membrane pass occupies residues 201 to 227 (KGVCVRLSMGPCIVEACTSALLAHYLL). Residues 228–233 (GLPWQW) are Extracellular-facing. A helical membrane pass occupies residues 234–242 (GFILGFVLG). Topologically, residues 243–270 (AVSPAVVVPSMLLLQGGGYGVEKGVPTL) are cytoplasmic. 4 residues coordinate Na(+): V244, G275, D278, and D279. Residues 271 to 290 (LMAAGSFDDILAITGFNTCL) form a helical membrane-spanning segment. Topologically, residues 291 to 300 (GIAFSTGSTV) are extracellular. A helical membrane pass occupies residues 301–324 (FNVLRGVLEVVIGVATGSVLGFFI). Residues 325–339 (QYFPSRDQDKLVCKR) lie on the Cytoplasmic side of the membrane. Residues 340–357 (TFLVLGLSVLAVFSSVHF) traverse the membrane as a helical segment. Residues 358–361 (GFPG) lie on the Extracellular side of the membrane. A helical membrane pass occupies residues 362–373 (SGGLCTLVMAFL). Residues 374-390 (AGMGWTSEKAEVEKIIA) are Cytoplasmic-facing. The chain crosses the membrane as a helical span at residues 391 to 411 (VAWDIFQPLLFGLIGAEVSIA). Over 412–417 (SLRPET) the chain is Extracellular. A helical transmembrane segment spans residues 418-440 (VGLCVATVGIAVLIRILTTFLMV). Residues 441–461 (CFAGFNLKEKIFISFAWLPKA) lie on the Cytoplasmic side of the membrane. A helical transmembrane segment spans residues 462-473 (TVQAAIGSVALD). The Extracellular segment spans residues 474–486 (TARSHGEKQLEDY). Residues 487–509 (GMDVLTVAFLSILITAPIGSLLI) traverse the membrane as a helical segment. At 510-537 (GLLGPRLLQKVEHQNKDEEVQGETSVQV) the chain is on the cytoplasmic side.

The protein belongs to the monovalent cation:proton antiporter 1 (CPA1) transporter (TC 2.A.36) family. Homodimer. Dimerization is essential for SLC9B2 activity. Lipids seem to play a role in the stabilization of the dimerization subdomain. Widely expressed. High levels detected in the distal tubules of the kidney nephron. Detected in red blood cells (at protein level).

The protein resides in the cell membrane. The protein localises to the mitochondrion membrane. It localises to the endosome membrane. It is found in the recycling endosome membrane. Its subcellular location is the cytoplasmic vesicle. The protein resides in the secretory vesicle. The protein localises to the synaptic vesicle membrane. It localises to the cell projection. It is found in the cilium. Its subcellular location is the flagellum membrane. The protein resides in the basolateral cell membrane. The protein localises to the apical cell membrane. It carries out the reaction Li(+)(out) + H(+)(in) = Li(+)(in) + H(+)(out). The catalysed reaction is Li(+)(in) + Na(+)(out) = Li(+)(out) + Na(+)(in). The enzyme catalyses Na(+)(in) + H(+)(out) = Na(+)(out) + H(+)(in). Its activity is regulated as follows. Allosterically inhibited by the N-terminal domain. Inhibited by phloretin. Electroneutral Na(+) Li(+)/H(+) antiporter that extrudes Na(+) or Li(+) in exchange for external protons across the membrane. Uses the proton gradient/membrane potential to extrude sodium. Contributes to the regulation of intracellular pH and sodium homeostasis. Also able to mediate Na(+)/Li(+) antiporter activity in kidney. May play a physiological role in renal tubular function and blood pressure homeostasis. Plays an important role for insulin secretion and clathrin-mediated endocytosis in beta-cells. Involved in sperm motility and fertility. It is controversial whether SLC9B2 plays a role in osteoclast differentiation or not. This Homo sapiens (Human) protein is Sodium/hydrogen exchanger 9B2.